The primary structure comprises 169 residues: Cell division inhibitor SulA (169 aa).

The tract at residues 106–112 (ALRTGNY) is ftsZ binding. The segment at 162–169 (KIHSNLYH) is lon protease binding.

Belongs to the SulA family. As to quaternary structure, interacts with FtsZ. In terms of processing, is rapidly cleaved and degraded by the Lon protease once DNA damage is repaired.

Component of the SOS system and an inhibitor of cell division. Accumulation of SulA causes rapid cessation of cell division and the appearance of long, non-septate filaments. In the presence of GTP, binds a polymerization-competent form of FtsZ in a 1:1 ratio, thus inhibiting FtsZ polymerization and therefore preventing it from participating in the assembly of the Z ring. This mechanism prevents the premature segregation of damaged DNA to daughter cells during cell division. This is Cell division inhibitor SulA from Salmonella dublin (strain CT_02021853).